Reading from the N-terminus, the 326-residue chain is DNA-directed RNA polymerase subunit alpha (326 aa).

An alpha N-terminal domain (alpha-NTD) region spans residues Met-1 to Glu-231. The tract at residues Ile-247–Lys-326 is alpha C-terminal domain (alpha-CTD).

It belongs to the RNA polymerase alpha chain family. In terms of assembly, homodimer. The RNAP catalytic core consists of 2 alpha, 1 beta, 1 beta' and 1 omega subunit. When a sigma factor is associated with the core the holoenzyme is formed, which can initiate transcription.

The enzyme catalyses RNA(n) + a ribonucleoside 5'-triphosphate = RNA(n+1) + diphosphate. DNA-dependent RNA polymerase catalyzes the transcription of DNA into RNA using the four ribonucleoside triphosphates as substrates. The chain is DNA-directed RNA polymerase subunit alpha from Ralstonia nicotianae (strain ATCC BAA-1114 / GMI1000) (Ralstonia solanacearum).